The sequence spans 573 residues: Squalene monooxygenase (573 aa).

Residues 1–19 are Cytoplasmic-facing; it reads MWTFLGIATFTYFYKKCGD. The interaction with MARCHF6 stretch occupies residues 1–99; the sequence is MWTFLGIATF…EQLESKRRRK (99 aa). Residues 20–40 lie within the membrane without spanning it; the sequence is VTLANKELLLCVLVFLSLGLV. The Cytoplasmic segment spans residues 41–573; sequence LSYRCRHRNG…IYSEMKYLVH (533 aa). The required for degradation in response to high membrane cholesterol levels stretch occupies residues 61-72; sequence QFAAFSDILSAL. The tract at residues 100-573 is sufficient for catalytic activity; that stretch reads EVNLSETTLT…IYSEMKYLVH (474 aa). Residues 132 to 133, 152 to 153, Arg160, Arg233, Val249, Asp407, and Met420 contribute to the FAD site; these read VL and ER. The interval 515–573 is hydrophobic; mediates interaction with membranes; it reads PLLLIRHFFSVAVYATYFCFKSEPWATKPRALFSSGAILYKACSIIFPLIYSEMKYLVH.

Belongs to the squalene monooxygenase family. As to quaternary structure, interacts (via N-terminal domain) with MARCHF6. Interacts with SMIM22; this interaction modulates lipid droplet formation. Requires FAD as cofactor. Post-translationally, ubiquitinated by MARCHF6 in response to high cholesterol levels in intracellular membranes, leading to proteasomal degradation. Detected in lever (at protein level).

It localises to the microsome membrane. The protein resides in the endoplasmic reticulum membrane. It catalyses the reaction squalene + reduced [NADPH--hemoprotein reductase] + O2 = (S)-2,3-epoxysqualene + oxidized [NADPH--hemoprotein reductase] + H2O + H(+). It functions in the pathway terpene metabolism; lanosterol biosynthesis; lanosterol from farnesyl diphosphate: step 2/3. Its activity is regulated as follows. Inhibited by NB-598 ((E)N-ethyl-N-(6,6-dimethyl-2-hepten-4-ynyl)-3-[(3,3'-bi-thiophen-5-yl)methoxy]benzene-methanamine). Contrary to fungal enzymes, the mammalian enzyme is only slightly inhibited by terbinafine. Its function is as follows. Catalyzes the stereospecific oxidation of squalene to (S)-2,3-epoxysqualene, and is considered to be a rate-limiting enzyme in steroid biosynthesis. The sequence is that of Squalene monooxygenase (Sqle) from Rattus norvegicus (Rat).